We begin with the raw amino-acid sequence, 318 residues long: D-alanine--D-alanine ligase (318 aa).

The 196-residue stretch at 116-311 folds into the ATP-grasp domain; sequence KQVWQSLGIP…FQQLVLAILA (196 aa). An ATP-binding site is contributed by 142–197; sequence SAELGFPLIVKPAHEGSSIGMAKVNSEQELVAAWKDAAKYDSQVLVEQWIHGPEFT. Mg(2+)-binding residues include D265, E278, and N280.

Belongs to the D-alanine--D-alanine ligase family. Mg(2+) serves as cofactor. Mn(2+) is required as a cofactor.

The protein localises to the cytoplasm. It carries out the reaction 2 D-alanine + ATP = D-alanyl-D-alanine + ADP + phosphate + H(+). Its pathway is cell wall biogenesis; peptidoglycan biosynthesis. Its function is as follows. Cell wall formation. This chain is D-alanine--D-alanine ligase, found in Pseudomonas entomophila (strain L48).